Consider the following 601-residue polypeptide: COP9 signalosome complex subunit 1 (601 aa).

Acidic residues predominate over residues 1–10 (MQNELLDDPM). Disordered regions lie at residues 1 to 54 (MQNE…LDNP) and 268 to 294 (DADD…PYMV). A compositionally biased stretch (low complexity) spans 14–24 (APAAEAAAADE). The PCI domain maps to 338–500 (TILQIKTECL…GIVRILDERD (163 aa)). The tract at residues 535–581 (SISDKETRPKRKNQKESAKFDRNFGGIDVDEDPRGIAGPSGLSDDFN) is disordered.

The protein belongs to the CSN1 family. As to quaternary structure, component of the CSN complex, probably composed of csn-1, csn-2, csn-3, csn-4, csn-5, csn-6 and csn-7. Within the complex it probably interacts directly with csn-2, csn-4 and csn-5. May interact with itself. Interacts with rbx-1.

The protein resides in the cytoplasm. It is found in the nucleus. In terms of biological role, essential component of the COP9 signalosome complex (CSN), a complex involved in various cellular and developmental processes. The CSN complex is an essential regulator of the ubiquitin (Ubl) conjugation pathway by mediating the deneddylation of the cullin subunits of the SCF-type E3 ligase complexes, leading to decrease the Ubl ligase activity of SCF. The CSN complex plays an essential role in embryogenesis and oogenesis and is required to regulate microtubule stability in the early embryo. Mediates mei-3/katanin targeting for degradation at the meiosis to mitosis transition via deneddylation of cul-3. The sequence is that of COP9 signalosome complex subunit 1 (csn-1) from Caenorhabditis elegans.